The chain runs to 1045 residues: Elongation factor 3 (1045 aa).

The ADP site is built by Ile42, His44, and Ser83. HEAT repeat units follow at residues Pro86–Pro123, Ala125–Ser162, Leu166–Asn203, Leu171–Phe209, Asp205–Pro241, Ala242–Asp279, and Pro285–Val323. Residues Thr392 and His396 each contribute to the ADP site. ABC transporter domains follow at residues Glu426–Leu641 and Val667–Asp993. Positions 703, 922, 925, and 951 each coordinate ADP. The disordered stretch occupies residues Gly975–Phe1045. Over residues Arg1020–Lys1031 the composition is skewed to basic residues.

Belongs to the ABC transporter superfamily. ABCF family. EF3 subfamily.

It is found in the cytoplasm. The protein localises to the cytosol. It catalyses the reaction ATP + H2O = ADP + phosphate + H(+). It participates in protein biosynthesis; polypeptide chain elongation. Functionally, ribosome-dependent ATPase that functions in cytoplasmic translation elongation. Required for the ATP-dependent release of deacylated tRNA from the ribosomal E-site during protein biosynthesis. Stimulates the eEF1A-dependent binding of aminoacyl-tRNA to the ribosomal A-site, which has reduced affinity for tRNA as long as the E-site is occupied. Assists translation termination by stimulating the release of nascent protein from the ribosome by release factors. The protein is Elongation factor 3 of Zygosaccharomyces rouxii (strain ATCC 2623 / CBS 732 / NBRC 1130 / NCYC 568 / NRRL Y-229).